An 829-amino-acid chain; its full sequence is Cadherin-16 (829 aa).

A signal peptide spans 1-18 (MVPAWLWLLCFSVPQALV). Topologically, residues 19–786 (EVSPTTLHVE…MKGMPTKLSA (768 aa)) are extracellular. Cadherin domains follow at residues 25–126 (LHVE…VPQF), 131–235 (YSAR…SIVE), 242–336 (EPVH…APVC), 341–449 (PPVS…APEF), 455–564 (GPVS…PPRL), and 569–665 (YEAD…APAL). 3 N-linked (GlcNAc...) asparagine glycosylation sites follow: Asn517, Asn602, and Asn722. The segment at 666 to 786 (PLAPMPSRHL…MKGMPTKLSA (121 aa)) is ectodomain G. The chain crosses the membrane as a helical span at residues 787–807 (VGILVGTLAAIGFFLILIFTH). Residues 808–829 (LALARKKDLDAPADNVPLKAAA) are Cytoplasmic-facing.

In terms of tissue distribution, kidney specific. Limited to the basolateral membranes of renal tubular epithelial cells.

The protein localises to the cell membrane. Cadherins are calcium-dependent cell adhesion proteins. They preferentially interact with themselves in a homophilic manner in connecting cells; cadherins may thus contribute to the sorting of heterogeneous cell types. The protein is Cadherin-16 (CDH16) of Oryctolagus cuniculus (Rabbit).